The chain runs to 253 residues: POU Class 2 homeobox-associating factor 3 (253 aa).

Residues 5–27 (PKVYQGVRVKMTVKELLQQRRAH) enclose the OCA domain.

This sequence belongs to the POU2AF family. In terms of assembly, interacts with POU2F3 in a DNA-dependent manner; this interaction increases POU2F3 transactivation activity. Expressed in tuft cells.

The protein localises to the cytoplasm. The protein resides in the nucleus. In terms of biological role, transcriptional coactivator that specifically associates with POU2F3. This complex drives the development of tuft cells, a rare a rare chemosensory cells that coordinate immune and neural functions within mucosal epithelial tissues. The sequence is that of POU Class 2 homeobox-associating factor 3 from Mus musculus (Mouse).